We begin with the raw amino-acid sequence, 1007 residues long: Serine/threonine-protein kinase PRP4 homolog (1007 aa).

Residues 1–104 are disordered; it reads MAATEPPSLR…PAKRTKLDDL (104 aa). An N-acetylalanine modification is found at Ala2. Phosphoserine occurs at positions 8, 21, 24, and 33. Composition is skewed to basic residues over residues 40-60 and 68-82; these read KHSRHKKKKHKHRSKHKKHKH and KKHKHKHKHKKHKRK. Residues 83–92 are compositionally biased toward basic and acidic residues; that stretch reads EVLDASDKEG. 2 positions are modified to phosphoserine: Ser88 and Ser94. Lys100 is modified (N6-acetyllysine; alternate). Lys100 participates in a covalent cross-link: Glycyl lysine isopeptide (Lys-Gly) (interchain with G-Cter in SUMO2); alternate. Residue Lys112 forms a Glycyl lysine isopeptide (Lys-Gly) (interchain with G-Cter in SUMO2) linkage. Lys118 participates in a covalent cross-link: Glycyl lysine isopeptide (Lys-Gly) (interchain with G-Cter in SUMO2); alternate. Lys118 is covalently cross-linked (Glycyl lysine isopeptide (Lys-Gly) (interchain with G-Cter in SUMO1); alternate). Ser132 bears the Phosphoserine mark. Position 141 is a phosphotyrosine (Tyr141). 2 disordered regions span residues 141–535 and 560–583; these read YESG…EDEE and NISVPSEPSSPQSSTRSRSPSPDD. 3 positions are modified to phosphoserine: Ser143, Ser145, and Ser167. Positions 158–169 are enriched in low complexity; it reads GNRSSTRSSSTR. Glycyl lysine isopeptide (Lys-Gly) (interchain with G-Cter in SUMO2) cross-links involve residues Lys171 and Lys178. 2 stretches are compositionally biased toward basic residues: residues 180–203 and 215–231; these read SAKKRSKSRSKERTRHRSDKRKSK and RSKSKERRKSKSPSKRS. Phosphoserine is present on residues Ser240, Ser242, Ser258, Ser278, Ser292, and Ser294. The span at 248-271 shows a compositional bias: basic and acidic residues; sequence RSQEKVGKARSPADEKIKSEEKGK. A compositionally biased stretch (basic and acidic residues) spans 294–303; that stretch reads SPVDLRDKSK. A compositionally biased stretch (basic residues) spans 304 to 315; it reads DRRSRSKERKSK. Basic and acidic residues predominate over residues 316-325; it reads RSEIDKEKKP. A phosphoserine mark is found at Ser328, Ser354, Ser356, Ser366, and Ser368. A compositionally biased stretch (basic residues) spans 342 to 367; the sequence is PSRRPGRSPKRRSLSPKQRDKSRRSR. Thr385 carries the phosphothreonine modification. A Phosphoserine modification is found at Ser387. 2 stretches are compositionally biased toward basic and acidic residues: residues 395 to 408 and 415 to 429; these read RSLERKRREPERRR and RPRDDILGRCERSKD. Residues Ser427, Ser431, and Ser437 each carry the phosphoserine modification. Residues 438 to 497 show a composition bias toward basic residues; that stretch reads PSRRRSRSPIRRRSRSPLRRSRSPRRRSRSPRRRDRSRRSRSRLRRRSRSRGGHRRRSRS. A phosphoserine mark is found at Ser518, Ser519, Ser520, Ser565, Ser569, Ser576, Ser578, and Ser580. Positions 518-535 are enriched in acidic residues; the sequence is SSSDDNLEDFDVEEEDEE. Over residues 562–581 the composition is skewed to low complexity; it reads SVPSEPSSPQSSTRSRSPSP. Glycyl lysine isopeptide (Lys-Gly) (interchain with G-Cter in SUMO2) cross-links involve residues Lys593 and Lys659. The 317-residue stretch at 687–1003 folds into the Protein kinase domain; sequence YNVYGYTGQG…INQALQHAFI (317 aa). ATP contacts are provided by residues 693 to 701 and Lys717; that span reads TGQGVFSNV. Residue Lys717 is modified to N6-acetyllysine. Catalysis depends on Asp815, which acts as the Proton acceptor. Tyr849 carries the phosphotyrosine modification. Position 852 is a phosphoserine (Ser852).

Belongs to the protein kinase superfamily. CMGC Ser/Thr protein kinase family. As to quaternary structure, interacts with CLK1 C-terminus. Associates with the U5 snRNP and NCOR1 deacetylase complexes. Identified in the spliceosome C complex. Phosphorylated by CLK1. Autophosphorylated; phosphorylation inhibits interaction with its targets, such as PRPF6 or SMARCA4.

It localises to the nucleus. Its subcellular location is the chromosome. The protein localises to the centromere. It is found in the kinetochore. The catalysed reaction is L-seryl-[protein] + ATP = O-phospho-L-seryl-[protein] + ADP + H(+). It catalyses the reaction L-threonyl-[protein] + ATP = O-phospho-L-threonyl-[protein] + ADP + H(+). In terms of biological role, serine/threonine kinase involved in spliceosomal assembly as well as mitosis and signaling regulation. Connects chromatin mediated regulation of transcription and pre-mRNA splicing. During spliceosomal assembly, interacts with and phosphorylates PRPF6 and PRPF31, components of the U4/U6-U5 tri-small nuclear ribonucleoprotein (snRNP), to facilitate the formation of the spliceosome B complex. Plays a role in regulating transcription and the spindle assembly checkpoint (SAC). Associates with U5 snRNP and NCOR1 deacetylase complexes which may allow a coordination of pre-mRNA splicing with chromatin remodeling events involved in transcriptional regulation. Associates and probably phosphorylates SMARCA4 and NCOR1. Phosphorylates SRSF1. Associates with kinetochores during mitosis and is necessary for recruitment and maintenance of the checkpoint proteins such as MAD1L1 and MAD12L1 at the kinetochores. Phosphorylates and regulates the activity of the transcription factors such as ELK1 and KLF13. Phosphorylates nuclear YAP1 and WWTR1/TAZ which induces nuclear exclusion and regulates Hippo signaling pathway, involved in tissue growth control. The polypeptide is Serine/threonine-protein kinase PRP4 homolog (Prp4k) (Rattus norvegicus (Rat)).